The chain runs to 223 residues: uncharacterized protein (223 aa).

This is an uncharacterized protein from Mycoplasma pneumoniae (strain ATCC 29342 / M129 / Subtype 1) (Mycoplasmoides pneumoniae).